Consider the following 148-residue polypeptide: Calcium-regulated heat stable protein 1 (148 aa).

Residues 1–12 are compositionally biased toward pro residues; that stretch reads MSSEPPPPPLQP. Positions 1-47 are disordered; it reads MSSEPPPPPLQPPTHQTSVGLLDTPRTRDRSPSPLRGNVVPSPLPTR. Ser-2 carries the post-translational modification N-acetylserine. Phosphoserine is present on residues Ser-31, Ser-33, and Ser-42. Position 46 is a phosphothreonine (Thr-46). A phosphoserine mark is found at Ser-53 and Ser-59. In terms of domain architecture, CSD spans 63–130; that stretch reads VYKGVCKCFC…KLQAVEVVIT (68 aa). Phosphoserine is present on Ser-147.

Homodimer. Interacts with STYX. In terms of processing, can be phosphorylated by DYRK2 (in vitro). Dephosphorylated by calcineurin in a Ca(2+) dependent manner.

It is found in the cytoplasm. Its subcellular location is the P-body. The protein localises to the cytoplasmic granule. Binds mRNA and regulates the stability of target mRNA. The polypeptide is Calcium-regulated heat stable protein 1 (Carhsp1) (Mus musculus (Mouse)).